Here is a 135-residue protein sequence, read N- to C-terminus: CTP pyrophosphohydrolase (135 aa).

A Nudix hydrolase domain is found at Lys2–Ala127. Substrate is bound by residues Phe34 to Val39, Arg72, and Asp118. The Nudix box signature appears at Gly37–Gly58.

This sequence belongs to the Nudix hydrolase family. Monomer. Mg(2+) is required as a cofactor. Mn(2+) serves as cofactor.

It catalyses the reaction CTP + H2O = CMP + diphosphate + H(+). The catalysed reaction is dCTP + H2O = dCMP + diphosphate + H(+). In terms of biological role, hydrolase with a preference for pyrimidine substrates. Has high activity with 5-methyl-dCTP, and much lower activity with CTP, dCTP, 5-hydroxy-dCTP, 2-hydroxy-dATP and 8-hydroxy-dGTP. This is CTP pyrophosphohydrolase (nudG) from Escherichia coli (strain K12).